A 167-amino-acid polypeptide reads, in one-letter code: MGVTKKPDLNDPVLRAKLAKGMGHNYYGEPAWPNDLLYISPVVILGTIACNVGLAVLEPSMIGEPADPFATPLEILPEWYFFPVFQILRTVPNKLLGVLLMVLVPTGLLTVPFLENVNKFQNPFRRPVATTVFLIGTAVALWLGIGATLPIDKSLTLGLFQVDLTVK.

The next 3 membrane-spanning stretches (helical) occupy residues 36–56, 95–115, and 131–151; these read LLYI…GLAV, LLGV…PFLE, and TVFL…TLPI.

It belongs to the cytochrome b family. PetD subfamily. In terms of assembly, the 4 large subunits of the cytochrome b6-f complex are cytochrome b6, subunit IV (17 kDa polypeptide, petD), cytochrome f and the Rieske protein, while the 4 small subunits are petG, petL, petM and petN. The complex functions as a dimer.

The protein localises to the plastid. It is found in the chloroplast thylakoid membrane. Component of the cytochrome b6-f complex, which mediates electron transfer between photosystem II (PSII) and photosystem I (PSI), cyclic electron flow around PSI, and state transitions. This is Cytochrome b6-f complex subunit 4 from Calycanthus floridus var. glaucus (Eastern sweetshrub).